Here is a 341-residue protein sequence, read N- to C-terminus: HTH-type transcriptional repressor PurR (341 aa).

The HTH lacI-type domain occupies 2–56 (ATIKDVAKRANVSTTTVSHVINKTRFVAEETRNAVWAAIKELHYSPSAVARSLKV). A DNA-binding region (H-T-H motif) is located at residues 4-23 (IKDVAKRANVSTTTVSHVIN). Residues 48–56 (SAVARSLKV) mediate DNA binding. 5 residues coordinate hypoxanthine: tyrosine 73, arginine 190, threonine 192, phenylalanine 221, and aspartate 275.

Homodimer.

The protein operates within purine metabolism; purine nucleotide biosynthesis [regulation]. Functionally, is the main repressor of the genes involved in the de novo synthesis of purine nucleotides, regulating purB, purC, purEK, purF, purHD, purL, purMN and guaBA expression. PurR is allosterically activated to bind its cognate DNA by binding the purine corepressors, hypoxanthine or guanine, thereby effecting transcription repression. This Shigella sonnei (strain Ss046) protein is HTH-type transcriptional repressor PurR.